The chain runs to 202 residues: Sterile alpha motif domain-containing protein 10 (202 aa).

The interval 1-22 (MFTELRSKLSPPRARAGAVRPG) is disordered. An SAM domain is found at 118–184 (WSQQDVCKWL…LQQVLHLQVR (67 aa)).

This Mus musculus (Mouse) protein is Sterile alpha motif domain-containing protein 10.